The chain runs to 609 residues: Chaperone protein DnaK (609 aa).

Thr-172 is modified (phosphothreonine; by autocatalysis). The segment at 578–609 is disordered; that stretch reads QAQAQQQAGAGGAAKKDENVVDAEFEEVKDDK. The span at 597-609 shows a compositional bias: acidic residues; that stretch reads VVDAEFEEVKDDK.

Belongs to the heat shock protein 70 family.

Its function is as follows. Acts as a chaperone. The sequence is that of Chaperone protein DnaK from Geobacillus sp. (strain WCH70).